Reading from the N-terminus, the 438-residue chain is Coenzyme A disulfide reductase (438 aa).

Residue 8–33 (GAVAGGATCASQIRRLDKESEIIVFE) coordinates FAD. Thr-15, Gln-19, Arg-22, Ser-39, and Asn-42 together coordinate substrate. The active-site Nucleophile is the Cys-43. The Redox-active role is filled by Cys-43. Residue Lys-71 coordinates substrate. 151-166 (ALVVGAGYISLEVLEN) is a binding site for NADP(+). FAD is bound at residue 267-277 (TNIPNIYALGD). Substrate is bound at residue His-299. Tyr-419 contacts FAD. Residue Lys-427 coordinates substrate.

Belongs to the class-III pyridine nucleotide-disulfide oxidoreductase family. In terms of assembly, homodimer. FAD is required as a cofactor.

The catalysed reaction is NADP(+) + 2 CoA = CoA-disulfide + NADPH + H(+). Functionally, catalyzes specifically the NADPH-dependent reduction of coenzyme A disulfide. This is Coenzyme A disulfide reductase from Staphylococcus epidermidis (strain ATCC 35984 / DSM 28319 / BCRC 17069 / CCUG 31568 / BM 3577 / RP62A).